Reading from the N-terminus, the 211-residue chain is BAG family molecular chaperone regulator 2 (211 aa).

Alanine 2 is subject to N-acetylalanine. Serine 20, serine 31, and serine 73 each carry phosphoserine. Residues 20–61 (SMADRSSRLLESLDQLELRVEALREAATAVEQEKEVLLEMIH) are a coiled coil. The BAG domain maps to 109–189 (SLKHATRIID…NIENADKAIK (81 aa)).

In terms of assembly, binds to the ATPase domain of HSP/HSC70 chaperones. May interact with NWD1. Interacts with HSPA1A (via NBD), HSPA1B (via NBD) and HSPA8. May interact with DNJC9; the interaction seems to be histone-dependent.

In terms of biological role, co-chaperone for HSP70 and HSC70 chaperone proteins. Acts as a nucleotide-exchange factor (NEF) promoting the release of ADP from the HSP70 and HSC70 proteins thereby triggering client/substrate protein release. This is BAG family molecular chaperone regulator 2 from Bos taurus (Bovine).